The chain runs to 490 residues: Costunolide synthase (490 aa).

The helical; Signal-anchor for type II membrane protein transmembrane segment at 3–23 threads the bilayer; that stretch reads PLTIVSLAVASFLLFAFWALS. N-linked (GlcNAc...) asparagine glycans are attached at residues asparagine 167 and asparagine 255. A heme-binding site is contributed by cysteine 432.

This sequence belongs to the cytochrome P450 family. Requires heme as cofactor.

Its subcellular location is the membrane. The catalysed reaction is germacra-1(10),4,11(13)-trien-12-oate + reduced [NADPH--hemoprotein reductase] + O2 = (+)-costunolide + oxidized [NADPH--hemoprotein reductase] + 2 H2O. Its pathway is secondary metabolite biosynthesis; terpenoid biosynthesis. In terms of biological role, involved in the biosynthesis of germacrene-derived sesquiterpene lactones. Component of the parthenolide biosynthetic pathway; parthenolide and conjugates are promising anti-cancer drugs highly active against colon cancer cells. Hydroxylates germacrene A acid to 6-alpha-hydroxy-germacrne A acid, a precursor of sesquiterpene lactones that spontaneously undergoes a lactonization which yields costunolide. In Lactuca sativa (Garden lettuce), this protein is Costunolide synthase.